We begin with the raw amino-acid sequence, 166 residues long: Desiccation-related protein At2g46140 (166 aa).

Belongs to the LEA type 2 family.

This is Desiccation-related protein At2g46140 from Arabidopsis thaliana (Mouse-ear cress).